A 62-amino-acid chain; its full sequence is Photosystem II reaction center protein Z (62 aa).

2 helical membrane-spanning segments follow: residues 8–28 (AVFA…VVFA) and 41–61 (FSGT…NSLI).

This sequence belongs to the PsbZ family. PSII is composed of 1 copy each of membrane proteins PsbA, PsbB, PsbC, PsbD, PsbE, PsbF, PsbH, PsbI, PsbJ, PsbK, PsbL, PsbM, PsbT, PsbY, PsbZ, Psb30/Ycf12, at least 3 peripheral proteins of the oxygen-evolving complex and a large number of cofactors. It forms dimeric complexes.

The protein localises to the plastid. Its subcellular location is the chloroplast thylakoid membrane. In terms of biological role, may control the interaction of photosystem II (PSII) cores with the light-harvesting antenna, regulates electron flow through the 2 photosystem reaction centers. PSII is a light-driven water plastoquinone oxidoreductase, using light energy to abstract electrons from H(2)O, generating a proton gradient subsequently used for ATP formation. This is Photosystem II reaction center protein Z from Coffea arabica (Arabian coffee).